Reading from the N-terminus, the 410-residue chain is Peptidase T (410 aa).

His-79 serves as a coordination point for Zn(2+). Residue Asp-81 is part of the active site. Position 142 (Asp-142) interacts with Zn(2+). Glu-176 functions as the Proton acceptor in the catalytic mechanism. Glu-177, Asp-199, and His-381 together coordinate Zn(2+).

This sequence belongs to the peptidase M20B family. Requires Zn(2+) as cofactor.

Its subcellular location is the cytoplasm. The catalysed reaction is Release of the N-terminal residue from a tripeptide.. Functionally, cleaves the N-terminal amino acid of tripeptides. The chain is Peptidase T from Bacillus cereus (strain B4264).